The following is a 96-amino-acid chain: MKLRPLHDRVVVRRVKEEEKTKGGIIIPDNAKEKPQEGIIVAVGNGAIGDDNERVPLDVKKGDRVLFGKWSGTEVKIDGEDLLIMKESDIMGILDK.

Belongs to the GroES chaperonin family. As to quaternary structure, heptamer of 7 subunits arranged in a ring. Interacts with the chaperonin GroEL.

It is found in the cytoplasm. Together with the chaperonin GroEL, plays an essential role in assisting protein folding. The GroEL-GroES system forms a nano-cage that allows encapsulation of the non-native substrate proteins and provides a physical environment optimized to promote and accelerate protein folding. GroES binds to the apical surface of the GroEL ring, thereby capping the opening of the GroEL channel. This chain is Co-chaperonin GroES, found in Hyphomonas neptunium (strain ATCC 15444).